Reading from the N-terminus, the 382-residue chain is Cell division cycle-associated protein 7 (382 aa).

Disordered stretches follow at residues 68–118 (PLRV…EDGM) and 151–217 (GRHS…EDKY). Acidic residues predominate over residues 105 to 117 (SEEEEEEEEEEDG). The interval 152–177 (RHSLPGHRAKDSKSPRRRTFPGVATR) is interaction with MYC. Positions 167–183 (RRRTFPGVATRRNPERR) match the Nuclear localization signal motif. Threonine 170 is modified (phosphothreonine). Phosphoserine is present on serine 197. Threonine 203 carries the post-translational modification Phosphothreonine. Residues 203–215 (TEEEEEEEEEEED) show a composition bias toward acidic residues. A Glycyl lysine isopeptide (Lys-Gly) (interchain with G-Cter in SUMO2) cross-link involves residue lysine 216. Serine 225 carries the post-translational modification Phosphoserine. The mediates transcriptional activity stretch occupies residues 258-382 (EEEIRNICSN…SLKQEFEMQA (125 aa)).

Interacts with MYC (via C-terminus), YWHAE and YWHAZ. Post-translationally, phosphorylation at Thr-170 promotes interaction with YWHAE and YWHAZ, dissociation from MYC and sequestration in the cytoplasm.

It localises to the nucleus. It is found in the cytoplasm. Its function is as follows. Participates in MYC-mediated cell transformation and apoptosis; induces anchorage-independent growth and clonogenicity in lymphoblastoid cells. Insufficient to induce tumorigenicity when overexpressed but contributes to MYC-mediated tumorigenesis. May play a role as transcriptional regulator. This is Cell division cycle-associated protein 7 (Cdca7) from Mus musculus (Mouse).